A 632-amino-acid chain; its full sequence is Probable potassium transport system protein Kup 1 (632 aa).

12 helical membrane-spanning segments follow: residues 17 to 37 (LFYL…TSPL), 60 to 80 (LISL…VLFL), 106 to 126 (TALL…DAMI), 144 to 164 (PSLA…LFVV), 175 to 195 (FFGP…ISHI), 210 to 230 (AVSF…AVFL), 254 to 274 (WFLL…ALVL), 292 to 312 (ALLP…QAVI), 344 to 364 (IFLP…VLSF), 370 to 390 (LATA…IMAF), 401 to 421 (LPVA…FLGA), and 426 to 446 (IHDG…VMWT).

This sequence belongs to the HAK/KUP transporter (TC 2.A.72) family.

The protein resides in the cell inner membrane. It catalyses the reaction K(+)(in) + H(+)(in) = K(+)(out) + H(+)(out). Functionally, transport of potassium into the cell. Likely operates as a K(+):H(+) symporter. The protein is Probable potassium transport system protein Kup 1 of Rhizobium etli (strain ATCC 51251 / DSM 11541 / JCM 21823 / NBRC 15573 / CFN 42).